A 421-amino-acid polypeptide reads, in one-letter code: Testin (421 aa).

The PET domain maps to 92–199 (MILTNPVAAK…GDVKLPRDMN (108 aa)). 2 disordered regions span residues 133–164 (EKQP…PSKC) and 193–213 (KLPR…GGDR). Positions 155 to 164 (PAHDQDPSKC) are enriched in basic and acidic residues. LIM zinc-binding domains are found at residues 234 to 297 (YSCY…CDSE), 299 to 359 (PRCA…NHAV), and 362 to 421 (QGCH…KMMS).

This sequence belongs to the prickle / espinas / testin family. Interacts via LIM domain 1 with ZYX. Interacts (via LIM domain 3) with ENAH and VASP. Interacts with ALKBH4, talin, actin, alpha-actinin, GRIP1 and PXN. Interacts (via LIM domain 2) with ACTL7A (via N-terminus). Heterodimer with ACTL7A; the heterodimer interacts with ENAH to form a heterotrimer.

Its subcellular location is the cytoplasm. It is found in the cell junction. The protein resides in the focal adhesion. Functionally, scaffold protein that may play a role in cell adhesion, cell spreading and in the reorganization of the actin cytoskeleton. Plays a role in the regulation of cell proliferation. May act as a tumor suppressor. This Muntiacus muntjak (Barking deer) protein is Testin (TES).